The following is a 268-amino-acid chain: Protein CONTINUOUS VASCULAR RING 1 (268 aa).

Residues 1–70 (MGDEKPVIVM…GWASKKFMTG (70 aa)) lie on the Cytoplasmic side of the membrane. Residues 21–48 (IPVADSGDKDDGSSSKPSSSSSASSSSH) form a disordered region. Positions 34–48 (SSKPSSSSSASSSSH) are enriched in low complexity. Residues 71 to 91 (CVILLPIAITFYITWWFIHFV) form a helical membrane-spanning segment. Over 92 to 103 (DGFFSPIYAQLG) the chain is Extracellular. The helical transmembrane segment at 104–124 (INVFGFGFLTSIAFIFLVGVF) threads the bilayer. The Cytoplasmic segment spans residues 125–268 (MSSWLGASVL…LASIDRATSL (144 aa)).

Belongs to the plant COV1 protein family. In terms of tissue distribution, mostly expressed in flowers and stems, and, to a lower extent, in roots and leaves.

Its subcellular location is the membrane. In terms of biological role, involved in the regulation of vascular patterning in the stem, probably by negatively regulating the differentiation of vascular tissue. This chain is Protein CONTINUOUS VASCULAR RING 1, found in Arabidopsis thaliana (Mouse-ear cress).